Here is a 78-residue protein sequence, read N- to C-terminus: MTVSTGIWILIVVIGVLVGLTGGFFGARHYMQNYLKQNPPISEEMLRSMMMQMGQRPSEKKLHQMLNSMKAASKNDNK.

The chain crosses the membrane as a helical span at residues 5–27 (TGIWILIVVIGVLVGLTGGFFGA).

The protein belongs to the UPF0154 family.

It localises to the membrane. The polypeptide is UPF0154 protein lp_2061 (Lactiplantibacillus plantarum (strain ATCC BAA-793 / NCIMB 8826 / WCFS1) (Lactobacillus plantarum)).